Reading from the N-terminus, the 181-residue chain is ECF RNA polymerase sigma factor RpoE (181 aa).

Residues 29–96 are sigma-70 factor domain-2; sequence LFQHFAPKVK…RRIDGLRKDR (68 aa). An Interaction with polymerase core subunit RpoC motif is present at residues 53–56; the sequence is ECAQ. The segment at 129-178 is sigma-70 factor domain-4; sequence AIARLPEAQRALIERAFFGDLTHRELAAETGLPLGTIKSRIRLALDRLRQ. The H-T-H motif DNA-binding region spans 151–170; the sequence is HRELAAETGLPLGTIKSRIR.

Belongs to the sigma-70 factor family. ECF subfamily. As to quaternary structure, interacts transiently with the RNA polymerase catalytic core formed by RpoA, RpoB, RpoC and RpoZ (2 alpha, 1 beta, 1 beta' and 1 omega subunit) to form the RNA polymerase holoenzyme that can initiate transcription. Forms a 1:1 complex (via sigma-70 factor domain 4) with anti-sigma factor ChrR; this inhibits the interaction of RpoE with the RNA polymerase catalytic core.

Functionally, sigma factors are initiation factors that promote the attachment of RNA polymerase to specific initiation sites and are then released. Extracytoplasmic function (ECF) sigma factors are held in an inactive form by a cognate anti-sigma factor until released. Sigma-E controls a transcriptional response to singlet oxygen, a by-product of photosynthesis; its continuous activity requires constant exposure to singlet oxygen. The regulon has about 180 genes that protect against or repair damage induced by singlet oxygen, including itself and rpoH2, a heat shock-responsive sigma factor. This Cereibacter sphaeroides (strain ATCC 17023 / DSM 158 / JCM 6121 / CCUG 31486 / LMG 2827 / NBRC 12203 / NCIMB 8253 / ATH 2.4.1.) (Rhodobacter sphaeroides) protein is ECF RNA polymerase sigma factor RpoE (rpoE).